Here is a 67-residue protein sequence, read N- to C-terminus: MMHIVMIGVNEKLSLVKLKNLGGNPIGVINAVFDTALQTMKQYKIDACLLRVLKSSKCSLQVPRVVL.

This is an uncharacterized protein from Escherichia coli (Bacteriophage T4).